The following is a 197-amino-acid chain: Cytochrome c oxidase polypeptide 5, mitochondrial (197 aa).

Residues 1-13 constitute a mitochondrion transit peptide; the sequence is MFLRSVTRAAARS. Over 14–129 the chain is Mitochondrial matrix; sequence SAVPTTGLRS…KGENLKIFFK (116 aa). The chain crosses the membrane as a helical span at residues 130–147; the sequence is VAQLTLVSFGIFYVIHLF. Residues 148-197 are Mitochondrial intermembrane-facing; the sequence is AKPQPKTMTKEWQEASNEYAKQEKINPIYGISAEGYEGKGFVQSPPAEKQ.

The protein belongs to the cytochrome c oxidase IV family. In terms of assembly, component of the cytochrome c oxidase (complex IV, CIV), a multisubunit enzyme composed of a catalytic core of 3 subunits and seevral supernumerary subunits. The complex exists as a monomer or a dimer and forms supercomplexes (SCs) in the inner mitochondrial membrane with ubiquinol-cytochrome c oxidoreductase (cytochrome b-c1 complex, complex III, CIII).

The protein resides in the mitochondrion inner membrane. The protein operates within energy metabolism; oxidative phosphorylation. In terms of biological role, component of the cytochrome c oxidase, the last enzyme in the mitochondrial electron transport chain which drives oxidative phosphorylation. The respiratory chain contains 3 multisubunit complexes succinate dehydrogenase (complex II, CII), ubiquinol-cytochrome c oxidoreductase (cytochrome b-c1 complex, complex III, CIII) and cytochrome c oxidase (complex IV, CIV), that cooperate to transfer electrons derived from NADH and succinate to molecular oxygen, creating an electrochemical gradient over the inner membrane that drives transmembrane transport and the ATP synthase. Cytochrome c oxidase is the component of the respiratory chain that catalyzes the reduction of oxygen to water. Electrons originating from reduced cytochrome c in the intermembrane space (IMS) are transferred via the dinuclear copper A center (CU(A)) of subunit 2 and heme A of subunit 1 to the active site in subunit 1, a binuclear center (BNC) formed by heme A3 and copper B (CU(B)). The BNC reduces molecular oxygen to 2 water molecules using 4 electrons from cytochrome c in the IMS and 4 protons from the mitochondrial matrix. The protein is Cytochrome c oxidase polypeptide 5, mitochondrial (cox5) of Aspergillus niger.